Here is a 622-residue protein sequence, read N- to C-terminus: WD repeat-containing protein 76 (622 aa).

Disordered regions lie at residues 75-94 (NSSKSVVHKKKDRKKTRRKV), 120-155 (ESTRLGPKRTSDSATLSVDAESSDEDSAPGLDDFSG), and 189-209 (MIKKRESPESKRKRPKKKENE). The segment covering 80 to 94 (VVHKKKDRKKTRRKV) has biased composition (basic residues). WD repeat units follow at residues 310–351 (VTKG…EDAM), 356–398 (AHSR…EVYR), 400–438 (EGNSPSSFDFLNDSSSLLVGHWDGHLSLVDRRTPGTSYE), 443–482 (SSLEKIRTVHVHPLSRQYFVTAGLRDVHVYDARFLKSRGS), 490–530 (EHSK…SQLP), 540–584 (VTGR…VHSL), and 587–622 (ECLVSVCSLSAVHPTRYILAGGNSSGKLHVFMHQET).

The protein belongs to the WD repeat DDB2/WDR76 family. As to quaternary structure, interacts with CUL4A and/or CUL4B.

Its function is as follows. Specifically binds 5-hydroxymethylcytosine (5hmC), suggesting that it acts as a specific reader of 5hmC. The polypeptide is WD repeat-containing protein 76 (Wdr76) (Mus musculus (Mouse)).